A 347-amino-acid chain; its full sequence is Oxygen sensor histidine kinase NreB (347 aa).

Residues Cys59, Cys62, Cys74, and Cys77 each coordinate [4Fe-4S] cluster. In terms of domain architecture, Histidine kinase spans 153 to 347 (RISRELHDGI…IVTLEVPITD (195 aa)). His159 carries the post-translational modification Phosphohistidine; by autocatalysis.

[4Fe-4S] cluster is required as a cofactor. In terms of processing, autophosphorylated.

It localises to the cytoplasm. It carries out the reaction ATP + protein L-histidine = ADP + protein N-phospho-L-histidine.. Its activity is regulated as follows. Activated by cysteine desulfurase, Fe(2+) ions and cysteine and inhibited by oxygen and ADP. Functionally, member of the two-component regulatory system NreB/NreC involved in the control of dissimilatory nitrate/nitrite reduction in response to oxygen. NreB functions as a direct oxygen sensor histidine kinase which is autophosphorylated, in the absence of oxygen, probably at the conserved histidine residue, and transfers its phosphate group probably to a conserved aspartate residue of NreC. NreB/NreC activates the expression of the nitrate (narGHJI) and nitrite (nir) reductase operons, as well as the putative nitrate transporter gene narT. The protein is Oxygen sensor histidine kinase NreB (nreB) of Staphylococcus carnosus (strain TM300).